The chain runs to 137 residues: Large ribosomal subunit protein uL16 (137 aa).

It belongs to the universal ribosomal protein uL16 family. As to quaternary structure, part of the 50S ribosomal subunit.

Functionally, binds 23S rRNA and is also seen to make contacts with the A and possibly P site tRNAs. The chain is Large ribosomal subunit protein uL16 from Rhizobium rhizogenes (strain K84 / ATCC BAA-868) (Agrobacterium radiobacter).